The sequence spans 108 residues: Transcription factor AmrZ (108 aa).

Functionally, functions both as a transcriptional activator and a repressor of multiple genes encoding virulence factors as well as genes involved in environmental adaptation. Represses genes involved in iron homeostasis. Modulates intracellular levels of c-di-GMP which in turn regulates swimming motility and biofilm formation. The sequence is that of Transcription factor AmrZ from Pseudomonas ogarae (strain DSM 112162 / CECT 30235 / F113).